The primary structure comprises 389 residues: MKFVDEAKILIVAGDGGNGCVSFRREKYIPKGGPDGGDGGDGGDVYMVADENLNTLIDYRFTKSYRAERGENGQSRDCTGKRGQDITINVPVGTRARDLATGEIIADLTVHGQKQMVAKGGFHGLGNTRFKSSVNRAPRQRTMGTPGESREVLLELMLLADVGMLGMPNAGKSTFIRAVSAAKPKVADYPFTTLVPSLGVVRMDSHQSFVVADIPGLIEGAADGAGLGIQFLKHLERCRVLLHLIDIDPIDGSDPVENAKIIISELEKYSDKLAQKPRWLVFNKVDLLDADEAKQKAQAIVEALGWEGDYYMIAAINQEGVKKLCWDIMEFLKVTPREQDIATALAAEEKVDFMWDDYHKEQLENPDLEDDDEDWDEEDDDGVEFIYQR.

In terms of domain architecture, Obg spans 1-159; sequence MKFVDEAKIL…REVLLELMLL (159 aa). The 174-residue stretch at 160-333 folds into the OBG-type G domain; sequence ADVGMLGMPN…LCWDIMEFLK (174 aa). GTP-binding positions include 166–173, 191–195, 213–216, 283–286, and 314–316; these read GMPNAGKS, FTTLV, DIPG, NKVD, and AAI. Serine 173 and threonine 193 together coordinate Mg(2+). The segment at 362 to 389 is disordered; it reads QLENPDLEDDDEDWDEEDDDGVEFIYQR. The segment covering 364–383 has biased composition (acidic residues); it reads ENPDLEDDDEDWDEEDDDGV.

It belongs to the TRAFAC class OBG-HflX-like GTPase superfamily. OBG GTPase family. As to quaternary structure, monomer. Mg(2+) is required as a cofactor.

It localises to the cytoplasm. Its function is as follows. An essential GTPase which binds GTP, GDP and possibly (p)ppGpp with moderate affinity, with high nucleotide exchange rates and a fairly low GTP hydrolysis rate. Plays a role in control of the cell cycle, stress response, ribosome biogenesis and in those bacteria that undergo differentiation, in morphogenesis control. This chain is GTPase Obg, found in Proteus mirabilis (strain HI4320).